The following is a 395-amino-acid chain: ATP-dependent RNA helicase eIF4A (395 aa).

Residue serine 2 is modified to N-acetylserine. Positions 22-50 (YKFDDMELDENLLRGVFGYGFEEPSAIQQ) match the Q motif motif. Residues 53–222 (IMPIIEGHDV…TKFMRNPVRI (170 aa)) form the Helicase ATP-binding domain. ATP is bound at residue 66 to 73 (AQSGTGKT). Threonine 73 carries the post-translational modification Phosphothreonine. Phosphoserine occurs at positions 77 and 129. Threonine 146 bears the Phosphothreonine mark. Positions 170–173 (DEAD) match the DEAD box motif. The 162-residue stretch at 233-394 (GIKQFYVNVE…ELPSDIATLL (162 aa)) folds into the Helicase C-terminal domain.

Belongs to the DEAD box helicase family. eIF4A subfamily. In terms of assembly, component of the eIF4F complex, which composition varies with external and internal environmental conditions. It is composed of at least eIF4A, eIF4E and eIF4G.

The protein resides in the cytoplasm. The catalysed reaction is ATP + H2O = ADP + phosphate + H(+). ATP-dependent RNA helicase which is a subunit of the eIF4F complex involved in cap recognition and is required for mRNA binding to ribosome. In the current model of translation initiation, eIF4A unwinds RNA secondary structures in the 5'-UTR of mRNAs which is necessary to allow efficient binding of the small ribosomal subunit, and subsequent scanning for the initiator codon. The protein is ATP-dependent RNA helicase eIF4A (TIF1) of Saccharomyces cerevisiae (strain YJM789) (Baker's yeast).